A 51-amino-acid polypeptide reads, in one-letter code: Mitochondrial import receptor subunit TOM5 homolog (51 aa).

N-acetylmethionine is present on M1. Residue K10 forms a Glycyl lysine isopeptide (Lys-Gly) (interchain with G-Cter in SUMO2) linkage. A helical membrane pass occupies residues 27–45; the sequence is SIRNFLIYVALLRVTPFIL.

The protein belongs to the Tom5 family. As to quaternary structure, forms part of the preprotein translocase complex of the outer mitochondrial membrane (TOM complex) which consists of at least 7 different proteins (TOMM5, TOMM6, TOMM7, TOMM20, TOMM22, TOMM40 and TOMM70).

Its subcellular location is the mitochondrion outer membrane. This Bos taurus (Bovine) protein is Mitochondrial import receptor subunit TOM5 homolog.